Here is a 206-residue protein sequence, read N- to C-terminus: Synaptosomal-associated protein 25 (206 aa).

Residues 1–20 (MAEDADMRNELEEMQRRADQ) show a composition bias toward basic and acidic residues. Residues 1-25 (MAEDADMRNELEEMQRRADQLADES) are disordered. Residues 1-75 (MAEDADMRNE…QINKDMKEAE (75 aa)) are interaction with CENPF. The t-SNARE coiled-coil homology 1 domain maps to 19 to 81 (DQLADESLES…KEAEKNSTDL (63 aa)). 4 S-palmitoyl cysteine lipidation sites follow: C85, C88, C90, and C92. The segment at 111–120 (GVVASQPARV) is interaction with ZDHHC17. T138 carries the phosphothreonine modification. The region spanning 140 to 202 (DARENEMDEN…DEANQRATKM (63 aa)) is the t-SNARE coiled-coil homology 2 domain. Residues S154 and S187 each carry the phosphoserine modification.

The protein belongs to the SNAP-25 family. As to quaternary structure, part of the SNARE core complex containing SNAP25, VAMP2 and STX1A; this complex binds CPLX1. Found in a complex containing SYT1, SV2B and syntaxin-1. Found in a ternary complex with STX1A and VAMP8. Interacts with HSC70 and with SYT9, forming a complex with DNAJC5. The interaction with SYT9 is inhibited in presence of calcium. Isoform 1 and isoform 2 interact with BLOC1S6. Interacts with CENPF. Interacts with EQTN. Interacts with HGS. Interacts with KCNB1 (via N-terminus); reduces the voltage-dependent potassium channel KCNB1 activity in pancreatic beta cells. Interacts with OTOF. Interacts with RIMS1. Interacts with SNAPIN. Interacts with STXBP6. Interacts with TRIM9. Interacts with ZDHHC13 (via ANK repeats). Interacts with ZDHHC17 (via ANK repeats). Associates with the BLOC-1 complex. Interacts with PLCL1 (via C2 domain). Interacts with PRRT2; this interaction may impair the formation of the SNARE complex. Interacts with alpha-synuclein/SNCA. Interacts with PRPH2. Interacts with ROM1. Interacts with STX3. Palmitoylated. Cys-85 appears to be the main site, and palmitoylation is required for membrane association.

The protein resides in the cytoplasm. The protein localises to the perinuclear region. It localises to the cell membrane. Its subcellular location is the synapse. It is found in the synaptosome. The protein resides in the photoreceptor inner segment. Functionally, t-SNARE involved in the molecular regulation of neurotransmitter release. May play an important role in the synaptic function of specific neuronal systems. Associates with proteins involved in vesicle docking and membrane fusion. Regulates plasma membrane recycling through its interaction with CENPF. Modulates the gating characteristics of the delayed rectifier voltage-dependent potassium channel KCNB1 in pancreatic beta cells. The protein is Synaptosomal-associated protein 25 (SNAP25) of Pongo abelii (Sumatran orangutan).